We begin with the raw amino-acid sequence, 429 residues long: Glucose-1-phosphate adenylyltransferase (429 aa).

Alpha-D-glucose 1-phosphate contacts are provided by residues Gly-162, 177–178, and Ser-209; that span reads EK.

This sequence belongs to the bacterial/plant glucose-1-phosphate adenylyltransferase family. In terms of assembly, homotetramer.

The enzyme catalyses alpha-D-glucose 1-phosphate + ATP + H(+) = ADP-alpha-D-glucose + diphosphate. Its pathway is glycan biosynthesis; glycogen biosynthesis. Its function is as follows. Involved in the biosynthesis of ADP-glucose, a building block required for the elongation reactions to produce glycogen. Catalyzes the reaction between ATP and alpha-D-glucose 1-phosphate (G1P) to produce pyrophosphate and ADP-Glc. The protein is Glucose-1-phosphate adenylyltransferase of Cyanothece sp. (strain PCC 7425 / ATCC 29141).